The primary structure comprises 3326 residues: Deoxyribonuclease CdiA (3326 aa).

Residues 36–342 form a two-partner system transport domain (TPS) region; it reads TADGVLTSGG…ARGALTLTGS (307 aa). An FHA-1 region spans residues 343–1396; that stretch reads YAGAGSLYSD…ITVRTGTLTN (1054 aa). Residues 1397-1765 are receptor binding domain (RBD); it reads QREGLVVTES…QQLGSPSLTD (369 aa). Residues 1766–1951 form a YP domain region; that stretch reads YPLPTSQSGL…LAQADKTNLQ (186 aa). Residues 1959–2097 are periplasmic FHA-1 repeat (pFR); sequence SVSLSAGGDI…AGGPLQLAAG (139 aa). Residues 2125–2660 form an FHA-2 region; the sequence is QGLVQSTVAS…SNRYDSKQTS (536 aa). The VENN CT cleavage motif motif lies at 3060 to 3063; the sequence is VENN. Positions 3060–3326 are CT domain; sequence VENNSLGDIA…DRNRQIGVIK (267 aa).

The protein in the N-terminal section; belongs to the CdiA toxin family. As to quaternary structure, the C-terminal (CT) domain interacts with cognate CdiI but not non-cognate CdiI from E.coli strain 536 / UPEC.

The protein resides in the target cell. It is found in the target cell cytoplasm. Its function is as follows. Toxic component of a toxin-immunity protein module, which functions as a cellular contact-dependent growth inhibition (CDI) system. CDI modules allow bacteria to communicate with and inhibit the growth of closely related neighboring bacteria in a contact-dependent fashion. CDI is neutralized by its cognate immunity protein CdiI, but not by non-cognate CdiI from other bacteria. The C-terminal domain (CT) has strong DNase activity; this activity is inhibited by cognate CdiI. Functionally, the CdiA protein is thought to be exported from the cell through the central lumen of CdiB, the other half of its two-partner system (TPS). The TPS domain probably remains associated with CdiB while the FHA-1 domain forms an extended filament with the receptor-binding domain (RBD) at its extremity; in the secretion arrested state the C-terminus of the RBD and YP domains form a hairpin-like structure as the FHA-2, PT and CT domains are periplasmic. The YP domain is probably responsible for this arrest at the point where it re-enters the host cell periplasm. Upon binding to a target cell outer membrane receptor a signal is transmitted to activate secretion. The filament elongates slightly, the rest of CdiA is secreted and the FHA-2 domain becomes stably associated with the target cell's outer membrane where it facilitates entry of the toxic CT domain into the target cell periplasm. From there the toxic CT domain is cleaved and gains access to the target cell cytoplasm via an inner membrane protein. The sequence is that of Deoxyribonuclease CdiA from Dickeya dadantii (strain 3937) (Erwinia chrysanthemi (strain 3937)).